Here is a 156-residue protein sequence, read N- to C-terminus: Small ribosomal subunit protein uS7 (156 aa).

The protein belongs to the universal ribosomal protein uS7 family. Part of the 30S ribosomal subunit. Contacts proteins S9 and S11.

Its function is as follows. One of the primary rRNA binding proteins, it binds directly to 16S rRNA where it nucleates assembly of the head domain of the 30S subunit. Is located at the subunit interface close to the decoding center, probably blocks exit of the E-site tRNA. This Nitrosospira multiformis (strain ATCC 25196 / NCIMB 11849 / C 71) protein is Small ribosomal subunit protein uS7.